A 142-amino-acid polypeptide reads, in one-letter code: AP-2 complex subunit sigma (142 aa).

This sequence belongs to the adaptor complexes small subunit family. Adaptor protein complex 2 (AP-2) is a heterotetramer composed of two large adaptins (alpha-type and beta-type subunits), a medium adaptin (mu-type subunit AP50) and a small adaptin (sigma-type subunit AP17).

Its subcellular location is the cell membrane. It is found in the membrane. The protein localises to the coated pit. Its function is as follows. Component of the adaptor complexes which link clathrin to receptors in coated vesicles. Clathrin-associated protein complexes are believed to interact with the cytoplasmic tails of membrane proteins, leading to their selection and concentration. The chain is AP-2 complex subunit sigma (ap2s1) from Dictyostelium discoideum (Social amoeba).